The primary structure comprises 274 residues: MQFSKMHGLGNDFMVVDAVTQNVFFSPELIRRLSDRHLGVGFDQLLVVEPPYDPELDFHYRIFNADGSEVSQCGNGARCFARFVRLKGLTNKRDIRVSTANGRMVLSVTEDELVRVNMGEPNFEPAQVPFRANKAEKTYIMRAAEQTILCGVVSMGNPHCVIQVDNVDTAAVETLGPVLESHERFPERANIGFMQVVRREHIRLRVYERGAGETRACGSGACAAVAVGIQQGLLAEEVRVELPGGRLDIAWKGPGHPLYMTGPAAHIYDGFIHL.

Substrate-binding residues include Asn-11, Gln-44, and Asn-64. Cys-73 functions as the Proton donor in the catalytic mechanism. Residues 74–75 (GN), Asn-157, Asn-190, and 208–209 (ER) each bind substrate. Cys-217 functions as the Proton acceptor in the catalytic mechanism. 218–219 (GS) is a substrate binding site.

The protein belongs to the diaminopimelate epimerase family. As to quaternary structure, homodimer.

It localises to the cytoplasm. It catalyses the reaction (2S,6S)-2,6-diaminopimelate = meso-2,6-diaminopimelate. It functions in the pathway amino-acid biosynthesis; L-lysine biosynthesis via DAP pathway; DL-2,6-diaminopimelate from LL-2,6-diaminopimelate: step 1/1. Functionally, catalyzes the stereoinversion of LL-2,6-diaminopimelate (L,L-DAP) to meso-diaminopimelate (meso-DAP), a precursor of L-lysine and an essential component of the bacterial peptidoglycan. In Salmonella agona (strain SL483), this protein is Diaminopimelate epimerase.